A 105-amino-acid chain; its full sequence is CRISPR-associated endoribonuclease Cas2 1 (105 aa).

Residue D20 participates in Mg(2+) binding.

The protein belongs to the CRISPR-associated endoribonuclease Cas2 protein family. Homodimer, forms a heterotetramer with a Cas1 homodimer. Requires Mg(2+) as cofactor.

Functionally, CRISPR (clustered regularly interspaced short palindromic repeat), is an adaptive immune system that provides protection against mobile genetic elements (viruses, transposable elements and conjugative plasmids). CRISPR clusters contain sequences complementary to antecedent mobile elements and target invading nucleic acids. CRISPR clusters are transcribed and processed into CRISPR RNA (crRNA). Functions as a ssRNA-specific endoribonuclease. Involved in the integration of spacer DNA into the CRISPR cassette. The polypeptide is CRISPR-associated endoribonuclease Cas2 1 (cas21) (Nitrosomonas europaea (strain ATCC 19718 / CIP 103999 / KCTC 2705 / NBRC 14298)).